An 810-amino-acid polypeptide reads, in one-letter code: Phenylalanine--tRNA ligase beta subunit (810 aa).

The tRNA-binding domain occupies 39–151; that stretch reads RTWAAGVVVG…AGLQAGQPVG (113 aa). A B5 domain is found at 408–494; it reads EPEHSITLRL…RLYGYDNFGE (87 aa). Mg(2+) contacts are provided by aspartate 472, aspartate 478, glutamate 481, and glutamate 482. An FDX-ACB domain is found at 716–809; the sequence is SSFPASDRDL…LVERFRVTLR (94 aa).

Belongs to the phenylalanyl-tRNA synthetase beta subunit family. Type 1 subfamily. Tetramer of two alpha and two beta subunits. It depends on Mg(2+) as a cofactor.

It localises to the cytoplasm. The enzyme catalyses tRNA(Phe) + L-phenylalanine + ATP = L-phenylalanyl-tRNA(Phe) + AMP + diphosphate + H(+). The chain is Phenylalanine--tRNA ligase beta subunit (pheT) from Synechococcus elongatus (strain ATCC 33912 / PCC 7942 / FACHB-805) (Anacystis nidulans R2).